The following is a 360-amino-acid chain: MSLTRLNIEAFRNIQSAQLIPAPGINLIYGQNGSGKTSILEAIYFLGMGRSFRSHLSQRVINNDDDKLTLFATLNLARGDSKIGLRRFRSGETEVRIDGEKVKRLSTLAETLPIQVITPESFSLLFEGPKSRRQFIDWGAFHADPQFYGAWTNVRRVLKQRNQLLRNGSSYSNIQFWDQEFVRYAEQVTEIRNHYVDSLNELLKGIIGEFLPSVDVKVSFTRGWDSKTDFAELLENQYSRDLATGHTVSGPHKADLRLRVGTLPAQDALSRGQLKLLVCALRIAQGKLLKQQIDKHSIYLVDDLPSELDAQHRQLLLKQLTDTGAQVFVTAIDPAAIVDSLHTPPSRMFHVEQGRVTVIE.

30–37 (GQNGSGKT) is a binding site for ATP.

The protein belongs to the RecF family.

It localises to the cytoplasm. The RecF protein is involved in DNA metabolism; it is required for DNA replication and normal SOS inducibility. RecF binds preferentially to single-stranded, linear DNA. It also seems to bind ATP. The sequence is that of DNA replication and repair protein RecF from Shewanella baltica (strain OS223).